A 327-amino-acid chain; its full sequence is Putative HTH-type transcriptional regulatory protein Mbar_A2318 (327 aa).

Positions 132 to 190 constitute an HTH cro/C1-type domain; sequence LKKARMGQSMSLGTLASMVGVSRRTISKYEEEGMDASIDVVLQLEDIFGVELAKPINIL. Residues 143–162 constitute a DNA-binding region (H-T-H motif); the sequence is LGTLASMVGVSRRTISKYEE.

This is Putative HTH-type transcriptional regulatory protein Mbar_A2318 from Methanosarcina barkeri (strain Fusaro / DSM 804).